A 148-amino-acid polypeptide reads, in one-letter code: Deoxyuridine 5'-triphosphate nucleotidohydrolase (148 aa).

Substrate contacts are provided by residues 68–70 (RSG), N81, 85–87 (TID), and K95.

It belongs to the dUTPase family. Requires Mg(2+) as cofactor.

It catalyses the reaction dUTP + H2O = dUMP + diphosphate + H(+). It functions in the pathway pyrimidine metabolism; dUMP biosynthesis; dUMP from dCTP (dUTP route): step 2/2. In terms of biological role, this enzyme is involved in nucleotide metabolism: it produces dUMP, the immediate precursor of thymidine nucleotides and it decreases the intracellular concentration of dUTP so that uracil cannot be incorporated into DNA. This Rickettsia peacockii (strain Rustic) protein is Deoxyuridine 5'-triphosphate nucleotidohydrolase.